We begin with the raw amino-acid sequence, 242 residues long: Small ribosomal subunit protein uS2 (242 aa).

Belongs to the universal ribosomal protein uS2 family.

This is Small ribosomal subunit protein uS2 from Neisseria gonorrhoeae (strain ATCC 700825 / FA 1090).